The chain runs to 130 residues: Small ribosomal subunit protein uS8 (130 aa).

Belongs to the universal ribosomal protein uS8 family. As to quaternary structure, part of the 30S ribosomal subunit. Contacts proteins S5 and S12.

In terms of biological role, one of the primary rRNA binding proteins, it binds directly to 16S rRNA central domain where it helps coordinate assembly of the platform of the 30S subunit. This Aliivibrio salmonicida (strain LFI1238) (Vibrio salmonicida (strain LFI1238)) protein is Small ribosomal subunit protein uS8.